The following is a 329-amino-acid chain: Ribosomal RNA small subunit methyltransferase C (329 aa).

It belongs to the methyltransferase superfamily. RsmC family. As to quaternary structure, monomer.

Its subcellular location is the cytoplasm. The enzyme catalyses guanosine(1207) in 16S rRNA + S-adenosyl-L-methionine = N(2)-methylguanosine(1207) in 16S rRNA + S-adenosyl-L-homocysteine + H(+). In terms of biological role, specifically methylates the guanine in position 1207 of 16S rRNA in the 30S particle. The chain is Ribosomal RNA small subunit methyltransferase C from Actinobacillus pleuropneumoniae serotype 3 (strain JL03).